Reading from the N-terminus, the 140-residue chain is Nucleoside diphosphate kinase (140 aa).

Residues lysine 11, phenylalanine 59, arginine 87, threonine 93, arginine 104, and asparagine 114 each coordinate ATP. Histidine 117 (pros-phosphohistidine intermediate) is an active-site residue.

It belongs to the NDK family. In terms of assembly, homotetramer. Requires Mg(2+) as cofactor.

The protein localises to the cytoplasm. The catalysed reaction is a 2'-deoxyribonucleoside 5'-diphosphate + ATP = a 2'-deoxyribonucleoside 5'-triphosphate + ADP. It catalyses the reaction a ribonucleoside 5'-diphosphate + ATP = a ribonucleoside 5'-triphosphate + ADP. Major role in the synthesis of nucleoside triphosphates other than ATP. The ATP gamma phosphate is transferred to the NDP beta phosphate via a ping-pong mechanism, using a phosphorylated active-site intermediate. This chain is Nucleoside diphosphate kinase, found in Rhizobium etli (strain ATCC 51251 / DSM 11541 / JCM 21823 / NBRC 15573 / CFN 42).